Here is a 381-residue protein sequence, read N- to C-terminus: Subtilisin E (381 aa).

Residues methionine 1–alanine 29 form the signal peptide. The propeptide occupies alanine 30–tyrosine 106. The region spanning lysine 38–alanine 103 is the Inhibitor I9 domain. Residue glutamine 108 participates in Ca(2+) binding. Residues proline 111–alanine 380 form the Peptidase S8 domain. The Charge relay system role is filled by aspartate 138. A Ca(2+)-binding site is contributed by aspartate 147. The active-site Charge relay system is the histidine 170. Leucine 181, asparagine 183, isoleucine 185, valine 187, alanine 275, tyrosine 277, threonine 280, and aspartate 303 together coordinate Ca(2+). The active-site Charge relay system is serine 327.

This sequence belongs to the peptidase S8 family. Requires Ca(2+) as cofactor.

Its subcellular location is the secreted. The enzyme catalyses Hydrolysis of proteins with broad specificity for peptide bonds, and a preference for a large uncharged residue in P1. Hydrolyzes peptide amides.. With respect to regulation, inhibited by PMSF (phenylmethylsulphonyl fluoride) and 3,4-dichloroisocoumarin but not by EDTA (shown for strain RT-5). Its function is as follows. An extracellular alkaline serine protease, it catalyzes the hydrolysis of proteins and peptide amides. This chain is Subtilisin E, found in Bacillus subtilis (strain 168).